Here is a 110-residue protein sequence, read N- to C-terminus: UPF0122 protein BCAH187_A3894 (110 aa).

It belongs to the UPF0122 family.

Its function is as follows. Might take part in the signal recognition particle (SRP) pathway. This is inferred from the conservation of its genetic proximity to ftsY/ffh. May be a regulatory protein. In Bacillus cereus (strain AH187), this protein is UPF0122 protein BCAH187_A3894.